The chain runs to 382 residues: Histidinol-phosphate aminotransferase (382 aa).

N6-(pyridoxal phosphate)lysine is present on K215. Residues 363-382 are disordered; sequence NIDNQNKTYSQTSSIRKGTI.

The protein belongs to the class-II pyridoxal-phosphate-dependent aminotransferase family. Histidinol-phosphate aminotransferase subfamily. In terms of assembly, homodimer. Pyridoxal 5'-phosphate is required as a cofactor.

The enzyme catalyses L-histidinol phosphate + 2-oxoglutarate = 3-(imidazol-4-yl)-2-oxopropyl phosphate + L-glutamate. It functions in the pathway amino-acid biosynthesis; L-histidine biosynthesis; L-histidine from 5-phospho-alpha-D-ribose 1-diphosphate: step 7/9. The polypeptide is Histidinol-phosphate aminotransferase (Yersinia pestis bv. Antiqua (strain Antiqua)).